We begin with the raw amino-acid sequence, 128 residues long: Fluoride-specific ion channel FluC (128 aa).

4 helical membrane passes run 5-25 (IVAI…LGLA), 35-55 (LGTL…AVVF), 67-87 (LFVI…SVEV), and 96-116 (FGWA…LTAL). Residues Gly75 and Thr78 each contribute to the Na(+) site.

This sequence belongs to the fluoride channel Fluc/FEX (TC 1.A.43) family.

The protein localises to the cell inner membrane. It carries out the reaction fluoride(in) = fluoride(out). Na(+) is not transported, but it plays an essential structural role and its presence is essential for fluoride channel function. Fluoride-specific ion channel. Important for reducing fluoride concentration in the cell, thus reducing its toxicity. This is Fluoride-specific ion channel FluC from Burkholderia vietnamiensis (strain G4 / LMG 22486) (Burkholderia cepacia (strain R1808)).